The sequence spans 838 residues: P protein (838 aa).

The Cytoplasmic portion of the chain corresponds to 1-179 (MHLEGRDGRR…KLRRCVQWLK (179 aa)). Disordered regions lie at residues 38–60 (LPRG…GQSS) and 74–94 (KGRS…DSCF). The span at 78–87 (HSSLPQMSSS) shows a compositional bias: polar residues. Residues 180 to 197 (VMGLFAFVVLCSILFSLY) form a helical membrane-spanning segment. Residues 198–330 (PDQGKLWQLL…QYLRGSVETQ (133 aa)) lie on the Extracellular side of the membrane. Asparagine 214, asparagine 218, and asparagine 273 each carry an N-linked (GlcNAc...) asparagine glycan. Residues 331–347 (VTIATAILAGVYALIIF) form a helical membrane-spanning segment. The Cytoplasmic portion of the chain corresponds to 348-353 (EIVHRT). A helical transmembrane segment spans residues 354-370 (LAAMLGSLAALAALAVI). Topologically, residues 371 to 384 (GDRPSLTHVVEWID) are extracellular. The chain crosses the membrane as a helical span at residues 385–401 (FETLALLFGMMILVAIF). The Cytoplasmic segment spans residues 402 to 423 (SETGFFDYCAVKAYRLSRGRVW). Residues 424–440 (AMIIMLCLIAAVLSAFL) traverse the membrane as a helical segment. Residues 441-513 (DNVTTMLLFT…DFAGFTAHMF (73 aa)) are Extracellular-facing. A glycan (N-linked (GlcNAc...) asparagine) is linked at asparagine 442. A helical membrane pass occupies residues 514–530 (IGICLVLLVCFPLLRLL). At 531-620 (YWNRKLYNKE…LQKKHRISDG (90 aa)) the chain is on the cytoplasmic side. Residues 621-637 (ILLAKCLTVLGFVIFMF) traverse the membrane as a helical segment. The Extracellular portion of the chain corresponds to 638-647 (FLNSFVPGIH). A helical transmembrane segment spans residues 648–664 (LDLGWIAILGAIWLLIL). Topologically, residues 665 to 679 (ADIHDFEIILHRVEW) are cytoplasmic. A helical membrane pass occupies residues 680–696 (ATLLFFAALFVLMEALA). At 697 to 720 (HLHLIEYVGEQTALLIKMVPEEQR) the chain is on the extracellular side. Residues 721–737 (LIAAIVLVVWVSALASS) traverse the membrane as a helical segment. At 738 to 760 (LIDNIPFTATMIPVLLNLSHDPE) the chain is on the cytoplasmic side. A helical transmembrane segment spans residues 761–777 (VGLPAPPLMYALAFGAC). Residues 778-817 (LGGNGTLIGASANVVCAGIAEQHGYGFSFMEFFRLGFPMM) lie on the Extracellular side of the membrane. A glycan (N-linked (GlcNAc...) asparagine) is linked at asparagine 781. A helical transmembrane segment spans residues 818 to 834 (VVSCTVGMCYLLVAHVV). Over 835–838 (VGWN) the chain is Cytoplasmic.

The protein belongs to the CitM (TC 2.A.11) transporter family. In terms of tissue distribution, expressed in melanocytes and retinal pigment epithelium.

The protein localises to the melanosome membrane. The enzyme catalyses chloride(in) = chloride(out). Functionally, contributes to a melanosome-specific anion (chloride) current that modulates melanosomal pH for optimal tyrosinase activity required for melanogenesis and the melanosome maturation. One of the components of the mammalian pigmentary system. May serve as a key control point at which ethnic skin color variation is determined. Major determinant of brown and/or blue eye color. Seems to regulate the post-translational processing of tyrosinase, which catalyzes the limiting reaction in melanin synthesis. The polypeptide is P protein (Homo sapiens (Human)).